The chain runs to 86 residues: Antimicrobial peptide 2 (86 aa).

Residues 1–25 (MVNMKCVALIVIVMMAFMMVDPSMG) form the signal peptide. Disulfide bonds link Cys29–Cys40, Cys34–Cys46, and Cys39–Cys53. In terms of domain architecture, Chitin-binding type-1 spans 29–53 (CVRGRCPSGMCCSQFGYCGKGPKYC). Residues 56–86 (ASTTVDHQADVAATKTAKNPTDAKLAGAGSP) constitute a propeptide, removed in mature form.

In terms of assembly, homodimer.

Its function is as follows. Chitin-binding protein with a defensive function against numerous chitin containing fungal pathogens. It is also a potent inhibitor of Gram-positive bacteria. The sequence is that of Antimicrobial peptide 2 from Amaranthus caudatus (Love-lies-bleeding).